The sequence spans 86 residues: MNSKIFAVLLLLGLLSCVLSDQYCPKSSITACKKMNIRNDCCKDDDCTGGSWCCATPCGNFCKYPADRPGGKRAAGGKSCKTGYVY.

A signal peptide spans 1-20; sequence MNSKIFAVLLLLGLLSCVLS. The region spanning 21–66 is the WAP domain; it reads DQYCPKSSITACKKMNIRNDCCKDDDCTGGSWCCATPCGNFCKYPA. 5 cysteine pairs are disulfide-bonded: C24/C54, C32/C58, C41/C53, C42/C80, and C47/C62.

It belongs to the venom protein 11 family. 01 (wap-1) subfamily. In terms of processing, contains 5 disulfide bonds. As to expression, expressed by the venom gland.

The protein resides in the secreted. Has antibacterial activity. This chain is U15-lycotoxin-Ls1g, found in Lycosa singoriensis (Wolf spider).